The chain runs to 240 residues: tRNA1(Val) (adenine(37)-N6)-methyltransferase (240 aa).

It belongs to the methyltransferase superfamily. tRNA (adenine-N(6)-)-methyltransferase family.

The protein resides in the cytoplasm. The enzyme catalyses adenosine(37) in tRNA1(Val) + S-adenosyl-L-methionine = N(6)-methyladenosine(37) in tRNA1(Val) + S-adenosyl-L-homocysteine + H(+). Specifically methylates the adenine in position 37 of tRNA(1)(Val) (anticodon cmo5UAC). This chain is tRNA1(Val) (adenine(37)-N6)-methyltransferase, found in Christiangramia forsetii (strain DSM 17595 / CGMCC 1.15422 / KT0803) (Gramella forsetii).